Consider the following 201-residue polypeptide: ATP-dependent Clp protease proteolytic subunit (201 aa).

The active-site Nucleophile is the serine 105. Histidine 130 is an active-site residue.

The protein belongs to the peptidase S14 family. In terms of assembly, fourteen ClpP subunits assemble into 2 heptameric rings which stack back to back to give a disk-like structure with a central cavity, resembling the structure of eukaryotic proteasomes.

It localises to the cytoplasm. The catalysed reaction is Hydrolysis of proteins to small peptides in the presence of ATP and magnesium. alpha-casein is the usual test substrate. In the absence of ATP, only oligopeptides shorter than five residues are hydrolyzed (such as succinyl-Leu-Tyr-|-NHMec, and Leu-Tyr-Leu-|-Tyr-Trp, in which cleavage of the -Tyr-|-Leu- and -Tyr-|-Trp bonds also occurs).. Cleaves peptides in various proteins in a process that requires ATP hydrolysis. Has a chymotrypsin-like activity. Plays a major role in the degradation of misfolded proteins. The protein is ATP-dependent Clp protease proteolytic subunit of Aquifex aeolicus (strain VF5).